The following is a 405-amino-acid chain: Histone deacetylase clr6 (405 aa).

The histone deacetylase stretch occupies residues 6–318 (KKVSYFYDED…WTYETGLLAG (313 aa)). The active site involves His138.

Belongs to the histone deacetylase family. HD type 1 subfamily. Heterotetramer of alp13, clr6, prw1 and pst2.

Its subcellular location is the nucleus. The catalysed reaction is N(6)-acetyl-L-lysyl-[histone] + H2O = L-lysyl-[histone] + acetate. In terms of biological role, responsible for the deacetylation of lysine residues on the N-terminal part of the core histones (H2A, H2B, H3 and H4). Histone deacetylation gives a tag for epigenetic repression and plays an important role in transcriptional regulation, cell cycle progression and developmental events. Histone deacetylases act via the formation of large multiprotein complexes. Has a role in chromatin assembly and chromosome segregation. The chain is Histone deacetylase clr6 (clr6) from Schizosaccharomyces pombe (strain 972 / ATCC 24843) (Fission yeast).